The primary structure comprises 179 residues: Proteasome chaperone 3 (179 aa).

The protein belongs to the PSMG3 family. In terms of assembly, component of the 20S proteasome chaperone. Forms a heterodimer with POC4 that binds to proteasome precursors. Interacts with POP2.

In terms of biological role, involved in 20S proteasome assembly, facilitating the alpha-ring formation. This is Proteasome chaperone 3 (IRC25) from Saccharomyces cerevisiae (strain ATCC 204508 / S288c) (Baker's yeast).